Consider the following 337-residue polypeptide: Protein-arginine kinase (337 aa).

The region spanning 8-239 (VVLSSRIRLA…KQIISSERRA (232 aa)) is the Phosphagen kinase C-terminal domain. Residues 11 to 15 (SSRIR), His76, Arg110, 161 to 165 (RASVM), and 192 to 197 (RGIYGE) each bind ATP. Residues 321-326 (RDVKRA) carry the RDXXRA motif of the pArg binding pocket involved in allosteric regulation motif.

It belongs to the ATP:guanido phosphotransferase family.

The enzyme catalyses L-arginyl-[protein] + ATP = N(omega)-phospho-L-arginyl-[protein] + ADP + H(+). Its activity is regulated as follows. Appears to be allosterically activated by the binding of pArg-containing polypeptides to the pArg-binding pocket localized in the C-terminal domain of McsB. In terms of biological role, catalyzes the specific phosphorylation of arginine residues in proteins. In Caldanaerobacter subterraneus subsp. tengcongensis (strain DSM 15242 / JCM 11007 / NBRC 100824 / MB4) (Thermoanaerobacter tengcongensis), this protein is Protein-arginine kinase.